Here is a 105-residue protein sequence, read N- to C-terminus: Mini zinc finger protein 1 (105 aa).

Residues 1–29 form a disordered region; sequence MGPQQDRSAAKPYANGSTAAAAAAGRKEN. A ZF-HD dimerization-type; degenerate zinc finger spans residues 35–84; the sequence is YRECQRNHAASIGGHAVDGCREFMASGAEGTAAALLCAACGCHRSFHRRE.

As to quaternary structure, homo- and heterodimers.

It is found in the cytoplasm. Its function is as follows. Inhibits zinc finger homeodomain (ZHD) transcription factors, by interacting with them to prevent both their nuclear localization and their DNA-binding properties. This Oryza sativa subsp. indica (Rice) protein is Mini zinc finger protein 1 (MIF1).